The sequence spans 251 residues: Hydroxyacylglutathione hydrolase (251 aa).

Residues His-53, His-55, Asp-57, His-58, His-110, Asp-127, and His-165 each coordinate Zn(2+).

This sequence belongs to the metallo-beta-lactamase superfamily. Glyoxalase II family. Monomer. Requires Zn(2+) as cofactor.

The enzyme catalyses an S-(2-hydroxyacyl)glutathione + H2O = a 2-hydroxy carboxylate + glutathione + H(+). The protein operates within secondary metabolite metabolism; methylglyoxal degradation; (R)-lactate from methylglyoxal: step 2/2. Its function is as follows. Thiolesterase that catalyzes the hydrolysis of S-D-lactoyl-glutathione to form glutathione and D-lactic acid. The chain is Hydroxyacylglutathione hydrolase from Escherichia coli (strain ATCC 8739 / DSM 1576 / NBRC 3972 / NCIMB 8545 / WDCM 00012 / Crooks).